The chain runs to 577 residues: Proline--tRNA ligase (577 aa).

The protein belongs to the class-II aminoacyl-tRNA synthetase family. ProS type 1 subfamily. As to quaternary structure, homodimer.

Its subcellular location is the cytoplasm. It catalyses the reaction tRNA(Pro) + L-proline + ATP = L-prolyl-tRNA(Pro) + AMP + diphosphate. Catalyzes the attachment of proline to tRNA(Pro) in a two-step reaction: proline is first activated by ATP to form Pro-AMP and then transferred to the acceptor end of tRNA(Pro). As ProRS can inadvertently accommodate and process non-cognate amino acids such as alanine and cysteine, to avoid such errors it has two additional distinct editing activities against alanine. One activity is designated as 'pretransfer' editing and involves the tRNA(Pro)-independent hydrolysis of activated Ala-AMP. The other activity is designated 'posttransfer' editing and involves deacylation of mischarged Ala-tRNA(Pro). The misacylated Cys-tRNA(Pro) is not edited by ProRS. The polypeptide is Proline--tRNA ligase (Limosilactobacillus reuteri (strain DSM 20016) (Lactobacillus reuteri)).